We begin with the raw amino-acid sequence, 189 residues long: Mediator of RNA polymerase II transcription subunit 10b (189 aa).

Residues 1–22 are disordered; it reads MDPTQNTSAGIGGSNGTIRYQT.

Belongs to the Mediator complex subunit 10 family. As to quaternary structure, component of the Mediator complex.

The protein localises to the nucleus. Functionally, component of the Mediator complex, a coactivator involved in the regulated transcription of nearly all RNA polymerase II-dependent genes. Mediator functions as a bridge to convey information from gene-specific regulatory proteins to the basal RNA polymerase II transcription machinery. The Mediator complex, having a compact conformation in its free form, is recruited to promoters by direct interactions with regulatory proteins and serves for the assembly of a functional preinitiation complex with RNA polymerase II and the general transcription factors. This Arabidopsis thaliana (Mouse-ear cress) protein is Mediator of RNA polymerase II transcription subunit 10b (MED10B).